The following is a 432-amino-acid chain: Queuine tRNA-ribosyltransferase accessory subunit 2 (432 aa).

Zn(2+) contacts are provided by Cys329, Cys331, Cys334, and His360. The tract at residues 390-432 (GQKSLPPYEPPKEEKLPMPAAQKAELMEPMEDLGEKQNKKQRA) is disordered. Basic and acidic residues predominate over residues 422–432 (LGEKQNKKQRA).

Belongs to the queuine tRNA-ribosyltransferase family. QTRT2 subfamily. In terms of assembly, heterodimer of a catalytic subunit and an accessory subunit. It depends on Zn(2+) as a cofactor.

It localises to the cytoplasm. In terms of biological role, non-catalytic subunit of the queuine tRNA-ribosyltransferase (TGT) that catalyzes the base-exchange of a guanine (G) residue with queuine (Q) at position 34 (anticodon wobble position) in tRNAs with GU(N) anticodons (tRNA-Asp, -Asn, -His and -Tyr), resulting in the hypermodified nucleoside queuosine (7-(((4,5-cis-dihydroxy-2-cyclopenten-1-yl)amino)methyl)-7-deazaguanosine). The chain is Queuine tRNA-ribosyltransferase accessory subunit 2 from Anopheles gambiae (African malaria mosquito).